The following is a 248-amino-acid chain: Ubiquinone biosynthesis O-methyltransferase (248 aa).

The S-adenosyl-L-methionine site is built by R41, G72, D93, and M136.

The protein belongs to the methyltransferase superfamily. UbiG/COQ3 family.

It carries out the reaction a 3-demethylubiquinol + S-adenosyl-L-methionine = a ubiquinol + S-adenosyl-L-homocysteine + H(+). The catalysed reaction is a 3-(all-trans-polyprenyl)benzene-1,2-diol + S-adenosyl-L-methionine = a 2-methoxy-6-(all-trans-polyprenyl)phenol + S-adenosyl-L-homocysteine + H(+). The protein operates within cofactor biosynthesis; ubiquinone biosynthesis. In terms of biological role, O-methyltransferase that catalyzes the 2 O-methylation steps in the ubiquinone biosynthetic pathway. This is Ubiquinone biosynthesis O-methyltransferase from Rhizobium etli (strain CIAT 652).